The sequence spans 456 residues: Neurexin-3-beta (456 aa).

A signal peptide spans 1-35 (MHLRIHARRNPPRRPAWTLGIWSLFWGCIVSSVWS). At 36-381 (SSNVASSSSS…EVIRESSSTT (346 aa)) the chain is on the extracellular side. A disordered region spans residues 41-63 (SSSSSPGSHSQHEHHFHGSKHHS). Basic residues predominate over residues 52–63 (HEHHFHGSKHHS). A Laminin G-like domain is found at 82 to 282 (ATYIFGKSGG…NPNIKINGSV (201 aa)). Ca(2+)-binding residues include D134 and I151. An N-linked (GlcNAc...) asparagine glycan is attached at N181. Ca(2+) is bound by residues I233 and N235. 2 N-linked (GlcNAc...) asparagine glycosylation sites follow: N279 and N323. Positions 316 to 340 (ATTTTRKNRSTASIQPTSDDLVSSA) are disordered. Positions 325 to 340 (STASIQPTSDDLVSSA) are enriched in polar residues. O-linked (Xyl...) (heparan sulfate) serine glycosylation is present at S339. The helical transmembrane segment at 382 to 402 (GMVVGIVAAAALCILILLYAM) threads the bilayer. Residues 403 to 456 (YKYRNRDEGSYQVDETRNYISNSAQSNGTLLKEKPPSSKGGHKKQKNKDKEYYV) lie on the Cytoplasmic side of the membrane. The tract at residues 424–456 (NSAQSNGTLLKEKPPSSKGGHKKQKNKDKEYYV) is disordered.

This sequence belongs to the neurexin family. As to quaternary structure, weakly interacts with CBLN1 and CBLN2. Very weak binding, if any, to CBLN4. Specific isoforms bind neuroligins NLGN1, NLGN2 and NLGN3. Interacts with CLSTN3. Post-translationally, processed by alpha-secretase leading to the formation of an extracellular soluble protein as well as a C-terminal membrane-embedded fragment (CTF). Proteolysis of these CTFs by gamma-secretase releases intracellular domains (ICDs) and extracellular peptides. In terms of processing, O-glycosylated; contains heparan sulfate. Heparan sulfate attachment is required for synapse development by mediating interactions with neuroligins.

It is found in the presynaptic cell membrane. The protein resides in the secreted. Functionally, neuronal cell surface protein that may be involved in cell recognition and cell adhesion. May mediate intracellular signaling. Functions as part of a trans-synaptic complex by binding to cerebellins and postsynaptic GRID1. This interaction helps regulate the activity of NMDA and AMPA receptors at hippocampal synapses without affecting synapse formation. NRXN3B-CBLN2-GRID1 complex transduce presynaptic signals into postsynaptic AMPAR response. The polypeptide is Neurexin-3-beta (NRXN3) (Bos taurus (Bovine)).